Here is a 299-residue protein sequence, read N- to C-terminus: Mitochondrial 2-oxodicarboxylate carrier (299 aa).

Solcar repeat units lie at residues 11 to 100 (REAS…YKKL), 107 to 196 (SPAL…VKNM), and 205 to 294 (LEFL…TYSW). 6 helical membrane passes run 17–37 (IVAG…LDVV), 70–89 (FGFY…KRAV), 113–133 (TIAG…FEVV), 167–187 (GLNK…MVYF), 205–225 (LEFL…SVIN), and 277–297 (LGPG…WLQE).

Belongs to the mitochondrial carrier (TC 2.A.29) family.

The protein localises to the mitochondrion inner membrane. It catalyses the reaction 2-oxoadipate(in) + 2-oxoglutarate(out) = 2-oxoadipate(out) + 2-oxoglutarate(in). It carries out the reaction hexanedioate(in) + 2-oxoglutarate(out) = hexanedioate(out) + 2-oxoglutarate(in). The enzyme catalyses L-2-aminoadipate(in) + 2-oxoglutarate(out) = L-2-aminoadipate(out) + 2-oxoglutarate(in). The catalysed reaction is glutarate(in) + 2-oxoglutarate(out) = glutarate(out) + 2-oxoglutarate(in). It catalyses the reaction 2-oxoheptanedioate(in) + 2-oxoglutarate(out) = 2-oxoheptanedioate(out) + 2-oxoglutarate(in). It carries out the reaction heptanedioate(in) + 2-oxoglutarate(out) = heptanedioate(out) + 2-oxoglutarate(in). The enzyme catalyses citrate(in) + 2-oxoglutarate(out) = citrate(out) + 2-oxoglutarate(in). In terms of biological role, transports dicarboxylates across the inner membranes of mitochondria by a counter-exchange mechanism. Can transport 2-oxoadipate (2-oxohexanedioate), 2-oxoglutarate, adipate (hexanedioate), glutarate, and to a lesser extent, pimelate (heptanedioate), 2-oxopimelate (2-oxoheptanedioate), 2-aminoadipate (2-aminohexanedioate), oxaloacetate, and citrate. Plays a central role in catabolism of lysine, hydroxylysine, and tryptophan, by transporting common metabolite intermediates (such as 2-oxoadipate) into the mitochondria, where it is converted into acetyl-CoA and can enter the citric acid (TCA) cycle. This Pongo abelii (Sumatran orangutan) protein is Mitochondrial 2-oxodicarboxylate carrier (SLC25A21).